The chain runs to 447 residues: MTEADSSVLQIWGGHPLQGHVKISGAKNSALVIMAGALLCSGDCRIRNVPLLADVERMGEVISALGVRLTRQADIIDINASEIKTSKAPYELVTQLRASFFAIGAILARLGVAQMPLPGGCAIGARPVDLHVRGLQAMGAEVQIEHGICNAYVPGSGGRLKGAKIYLDTPSVGATETLMMAATLADGETILENAAREPEVVDLANFCKAMGANIQGAGTSTITIVGVPKLHSVDYSIIPDRIEAGTFLVAGAITRSEITLSSVVPEHLIPLIAKLRDIGVTIIEESPDCLRILPAEILKATDIDTLPHPGFPTDMQAPFMALLTLAEGDSIINESVFENRLRHASELNRLGADIRVKGNTAFVRGVPLLSGAPVIGTDLRASAALVIAGLAAEGKTTIQGLHHLDRGYDQIDVKLQQLGAKILRVREEPANAEVAVNNNVSPASIST.

27-28 (KN) provides a ligand contact to phosphoenolpyruvate. Residue Arg-97 coordinates UDP-N-acetyl-alpha-D-glucosamine. Cys-121 (proton donor) is an active-site residue. Residue Cys-121 is modified to 2-(S-cysteinyl)pyruvic acid O-phosphothioketal. UDP-N-acetyl-alpha-D-glucosamine-binding positions include 126–130 (RPVDL), Asp-314, and Val-336.

Belongs to the EPSP synthase family. MurA subfamily.

It localises to the cytoplasm. It catalyses the reaction phosphoenolpyruvate + UDP-N-acetyl-alpha-D-glucosamine = UDP-N-acetyl-3-O-(1-carboxyvinyl)-alpha-D-glucosamine + phosphate. The protein operates within cell wall biogenesis; peptidoglycan biosynthesis. In terms of biological role, cell wall formation. Adds enolpyruvyl to UDP-N-acetylglucosamine. The sequence is that of UDP-N-acetylglucosamine 1-carboxyvinyltransferase from Nostoc sp. (strain PCC 7120 / SAG 25.82 / UTEX 2576).